A 79-amino-acid chain; its full sequence is D-alanyl carrier protein (79 aa).

Residues 1–77 (MDTKQGVLDI…KIVAKVESLE (77 aa)) form the Carrier domain. Ser-35 bears the O-(pantetheine 4'-phosphoryl)serine mark.

This sequence belongs to the DltC family. Post-translationally, 4'-phosphopantetheine is transferred from CoA to a specific serine of apo-DCP.

The protein localises to the cytoplasm. The protein operates within cell wall biogenesis; lipoteichoic acid biosynthesis. Functionally, carrier protein involved in the D-alanylation of lipoteichoic acid (LTA). The loading of thioester-linked D-alanine onto DltC is catalyzed by D-alanine--D-alanyl carrier protein ligase DltA. The DltC-carried D-alanyl group is further transferred to cell membrane phosphatidylglycerol (PG) by forming an ester bond, probably catalyzed by DltD. D-alanylation of LTA plays an important role in modulating the properties of the cell wall in Gram-positive bacteria, influencing the net charge of the cell wall. The sequence is that of D-alanyl carrier protein from Lactobacillus acidophilus (strain ATCC 700396 / NCK56 / N2 / NCFM).